The following is a 245-amino-acid chain: Probable phosphatase Teth514_1060 (245 aa).

Residues His-8, His-10, His-16, His-41, Glu-74, His-102, His-133, Asp-194, and His-196 each contribute to the Zn(2+) site.

It belongs to the PHP family. It depends on Zn(2+) as a cofactor.

In Thermoanaerobacter sp. (strain X514), this protein is Probable phosphatase Teth514_1060.